The chain runs to 116 residues: RutC family protein HI_1627 (116 aa).

This sequence belongs to the RutC family.

This is RutC family protein HI_1627 from Haemophilus influenzae (strain ATCC 51907 / DSM 11121 / KW20 / Rd).